A 167-amino-acid chain; its full sequence is NADH-quinone oxidoreductase subunit B (167 aa).

[4Fe-4S] cluster-binding residues include Cys40, Cys41, Cys105, and Cys134.

The protein belongs to the complex I 20 kDa subunit family. As to quaternary structure, NDH-1 is composed of 14 different subunits. Subunits NuoB, C, D, E, F, and G constitute the peripheral sector of the complex. [4Fe-4S] cluster is required as a cofactor.

The protein resides in the cell inner membrane. It catalyses the reaction a quinone + NADH + 5 H(+)(in) = a quinol + NAD(+) + 4 H(+)(out). Its function is as follows. NDH-1 shuttles electrons from NADH, via FMN and iron-sulfur (Fe-S) centers, to quinones in the respiratory chain. The immediate electron acceptor for the enzyme in this species is believed to be ubiquinone. Couples the redox reaction to proton translocation (for every two electrons transferred, four hydrogen ions are translocated across the cytoplasmic membrane), and thus conserves the redox energy in a proton gradient. The protein is NADH-quinone oxidoreductase subunit B of Campylobacter jejuni subsp. jejuni serotype O:6 (strain 81116 / NCTC 11828).